We begin with the raw amino-acid sequence, 194 residues long: Thymidine kinase (194 aa).

Residues 9 to 16 (GAMNSGKT) and 85 to 88 (DECQ) contribute to the ATP site. E86 functions as the Proton acceptor in the catalytic mechanism. 4 residues coordinate Zn(2+): C143, C146, C180, and H183.

Belongs to the thymidine kinase family. Homotetramer.

It localises to the cytoplasm. It carries out the reaction thymidine + ATP = dTMP + ADP + H(+). The polypeptide is Thymidine kinase (Enterococcus faecalis (strain ATCC 700802 / V583)).